The sequence spans 232 residues: Ribose-5-phosphate isomerase A (232 aa).

Substrate is bound by residues 28–31, 83–86, and 96–99; these read TGST, DGAD, and KGGG. E105 acts as the Proton acceptor in catalysis. K123 is a binding site for substrate.

This sequence belongs to the ribose 5-phosphate isomerase family. Homodimer.

The enzyme catalyses aldehydo-D-ribose 5-phosphate = D-ribulose 5-phosphate. It participates in carbohydrate degradation; pentose phosphate pathway; D-ribose 5-phosphate from D-ribulose 5-phosphate (non-oxidative stage): step 1/1. In terms of biological role, catalyzes the reversible conversion of ribose-5-phosphate to ribulose 5-phosphate. This Allorhizobium ampelinum (strain ATCC BAA-846 / DSM 112012 / S4) (Agrobacterium vitis (strain S4)) protein is Ribose-5-phosphate isomerase A.